The following is a 418-amino-acid chain: Acyl-coenzyme A amino acid N-acyltransferase 2 (418 aa).

Catalysis depends on charge relay system residues serine 234, aspartate 327, and histidine 361. The Microbody targeting signal motif lies at 416 to 418 (GKL).

This sequence belongs to the C/M/P thioester hydrolase family.

The protein resides in the peroxisome. Acyltransferase which efficiently conjugates very long-chain and long-chain fatty acids to taurine. Shows no conjugation activity in the presence of glycine. This Rattus norvegicus (Rat) protein is Acyl-coenzyme A amino acid N-acyltransferase 2.